The sequence spans 294 residues: Signal peptidase I (294 aa).

The segment at Met1–Pro59 is disordered. The Cytoplasmic segment spans residues Met1–Arg66. Residues Gly47 to Pro59 are compositionally biased toward basic and acidic residues. The helical transmembrane segment at Glu67 to Ala87 threads the bilayer. Over Arg88–Arg294 the chain is Extracellular. Residues Ser96 and Lys174 contribute to the active site.

It belongs to the peptidase S26 family.

The protein resides in the cell membrane. The catalysed reaction is Cleavage of hydrophobic, N-terminal signal or leader sequences from secreted and periplasmic proteins.. In Mycobacterium tuberculosis (strain CDC 1551 / Oshkosh), this protein is Signal peptidase I (lepB).